We begin with the raw amino-acid sequence, 498 residues long: ATP synthase subunit beta, chloroplastic (498 aa).

Position 172–179 (172–179 (GGAGVGKT)) interacts with ATP.

Belongs to the ATPase alpha/beta chains family. F-type ATPases have 2 components, CF(1) - the catalytic core - and CF(0) - the membrane proton channel. CF(1) has five subunits: alpha(3), beta(3), gamma(1), delta(1), epsilon(1). CF(0) has four main subunits: a(1), b(1), b'(1) and c(9-12).

The protein localises to the plastid. It is found in the chloroplast thylakoid membrane. It carries out the reaction ATP + H2O + 4 H(+)(in) = ADP + phosphate + 5 H(+)(out). Its function is as follows. Produces ATP from ADP in the presence of a proton gradient across the membrane. The catalytic sites are hosted primarily by the beta subunits. The protein is ATP synthase subunit beta, chloroplastic of Jasminum nudiflorum (Winter jasmine).